The sequence spans 129 residues: Follitropin subunit beta (129 aa).

The first 18 residues, 1–18 (MKSVQFCFLFCCWRVICC), serve as a signal peptide directing secretion. Cystine bridges form between cysteine 21–cysteine 69, cysteine 35–cysteine 84, cysteine 38–cysteine 122, cysteine 46–cysteine 100, cysteine 50–cysteine 102, and cysteine 105–cysteine 112. N-linked (GlcNAc...) asparagine glycans are attached at residues asparagine 25 and asparagine 42.

It belongs to the glycoprotein hormones subunit beta family. As to quaternary structure, heterodimer. The active follitropin is a heterodimer composed of an alpha chain/CGA shared with other hormones and a unique beta chain/FSHB shown here.

The protein localises to the secreted. Together with the alpha chain CGA constitutes follitropin, the follicle-stimulating hormone, and provides its biological specificity to the hormone heterodimer. Binds FSHR, a G protein-coupled receptor, on target cells to activate downstream signaling pathways. Follitropin is involved in follicle development and spermatogenesis in reproductive organs. This Panthera tigris altaica (Siberian tiger) protein is Follitropin subunit beta (FSHB).